The chain runs to 33 residues: Potassium channel toxin alpha-KTx 10.5 (33 aa).

Disulfide bonds link cysteine 4/cysteine 23, cysteine 9/cysteine 28, and cysteine 13/cysteine 30.

As to expression, expressed by the venom gland.

It is found in the secreted. In terms of biological role, inhibits less than 5% of human voltage-gated potassium (Kv) channel Kv1.3/KCNA3 currents at 100nM concentration and does not block human Kv1.1/KCNA1 and Kv1.2/KCNA2 currents. The protein is Potassium channel toxin alpha-KTx 10.5 of Centruroides bonito (Scorpion).